A 253-amino-acid polypeptide reads, in one-letter code: Sulfate transporter CysZ (253 aa).

The next 4 helical transmembrane spans lie at 31 to 51 (FVIL…WWLF), 75 to 95 (LLWP…FSTI), 151 to 171 (IVLL…PVLW), and 222 to 242 (IPLL…AMWV).

Belongs to the CysZ family.

It is found in the cell inner membrane. High affinity, high specificity proton-dependent sulfate transporter, which mediates sulfate uptake. Provides the sulfur source for the cysteine synthesis pathway. The protein is Sulfate transporter CysZ of Shigella flexneri serotype 5b (strain 8401).